A 94-amino-acid chain; its full sequence is Neutrophil defensin 3 (94 aa).

The N-terminal stretch at 1-19 (MRTLAILAAILLVALQAQA) is a signal peptide. The propeptide occupies 20-38 (EPLQARADEVAAAPEQIAA). Disulfide bonds link cysteine 66/cysteine 94, cysteine 68/cysteine 83, and cysteine 73/cysteine 93.

Belongs to the alpha-defensin family. Dimer. As to quaternary structure, (Microbial infection) Interacts with herpes virus 1 HHV-1 envelope glycoprotein B; this interaction inhibits viral infection.

The protein localises to the secreted. Its function is as follows. Effector molecule of the innate immune system that acts via antibiotic-like properties against a broad array of infectious agents including bacteria, fungi, and viruses. Possesses the ability to neutralize bacterial toxins such as B.anthracis lethal factor, Clostridium difficile cytotoxin B as well as leukocidin produced by Staphylococcus aureus. Also blocks herpes simplex virus infection by interacting with envelope glycoprotein B and thus preventing its binding to heparan sulfate, the receptor for attachment. The protein is Neutrophil defensin 3 (DEFA3) of Homo sapiens (Human).